The following is a 291-amino-acid chain: N-acetylmannosamine kinase (291 aa).

ATP is bound by residues 5-12 and 132-139; these read AIDIGGTK and GVGGGVVC. Residues His-156, Cys-166, Cys-168, and Cys-173 each contribute to the Zn(2+) site.

This sequence belongs to the ROK (NagC/XylR) family. NanK subfamily. As to quaternary structure, homodimer.

It catalyses the reaction an N-acyl-D-mannosamine + ATP = an N-acyl-D-mannosamine 6-phosphate + ADP + H(+). The protein operates within amino-sugar metabolism; N-acetylneuraminate degradation; D-fructose 6-phosphate from N-acetylneuraminate: step 2/5. Its function is as follows. Catalyzes the phosphorylation of N-acetylmannosamine (ManNAc) to ManNAc-6-P. The polypeptide is N-acetylmannosamine kinase (Salmonella typhi).